We begin with the raw amino-acid sequence, 134 residues long: Ribonuclease VapC2 (134 aa).

One can recognise a PINc domain in the interval 3 to 124 (YMLDTNICVY…TNNIKEFKRI (122 aa)). Residue D6 coordinates Mg(2+).

This sequence belongs to the PINc/VapC protein family. As to quaternary structure, forms complexes with VapB2; probably VapC2(4):VapB2(2) in the absence of DNA, and VapC2(4):VapB2(4) in the presence of DNA. Crystallizes as heterodimers with stoichiometry VapC2(4):VapB2(4) in the presence of its probable promoter DNA. The heterodimers are in contact via alternative VapC-VapC and VapB-VapB interactions. This subunit does not contact DNA. It depends on Mg(2+) as a cofactor.

In terms of biological role, toxic component of a type II toxin-antitoxin (TA) system. Has ssRNase activity. Upon expression in E.coli or S.cerevisiae inhibits growth in liquid culture; in S.cerevisiae its expression leads to apoptosis-like characteristics. Rapidly induces apoptosis (within 2 hours) upon microinjection into mouse fibroblasts (L929 line); pretreatment of cells with dexamethasone protects them. Probably contributes to host cell death if bacterial cell lysis occurs during host infection. Its toxic effect is neutralized by coexpression with cognate antitoxin VapB2, its RNase activity is partially inhibited in vitro by VapB2. The chain is Ribonuclease VapC2 from Rickettsia felis (strain ATCC VR-1525 / URRWXCal2) (Rickettsia azadi).